The sequence spans 103 residues: Small ribosomal subunit protein uS10 (103 aa).

The protein belongs to the universal ribosomal protein uS10 family. In terms of assembly, part of the 30S ribosomal subunit.

In terms of biological role, involved in the binding of tRNA to the ribosomes. This chain is Small ribosomal subunit protein uS10, found in Jannaschia sp. (strain CCS1).